The chain runs to 510 residues: Cytochrome P450 monooxygenase penQ (510 aa).

The helical transmembrane segment at 9 to 26 (WIVTLIVAATTYCTLRWV) threads the bilayer. N-linked (GlcNAc...) asparagine glycosylation is found at N148 and N341. C448 lines the heme pocket. A glycan (N-linked (GlcNAc...) asparagine) is linked at N482.

The protein belongs to the cytochrome P450 family. Requires heme as cofactor.

The protein resides in the membrane. It participates in secondary metabolite biosynthesis. Functionally, cytochrome P450 monooxygenase; part of the gene cluster that mediates the biosynthesis of the indole diterpenes penitrems. The geranylgeranyl diphosphate (GGPP) synthase penG catalyzes the first step in penitrem biosynthesis via conversion of farnesyl pyrophosphate and isopentyl pyrophosphate into geranylgeranyl pyrophosphate (GGPP). Condensation of indole-3-glycerol phosphate with GGPP by the prenyl transferase penC then forms 3-geranylgeranylindole (3-GGI). Epoxidation by the FAD-dependent monooxygenase penM leads to a epoxidized-GGI that is substrate of the terpene cyclase penB for cyclization to yield paspaline. Paspaline is subsequently converted to 13-desoxypaxilline by the cytochrome P450 monooxygenase penP, the latter being then converted to paxilline by the cytochrome P450 monooxygenase penQ. Paxilline is converted to beta-paxitriol via C-10 ketoreduction by the short-chain dehydrogenase PC-15 which can be monoprenylated at the C-20 by the indole diterpene prenyltransferase penD. A two-step elimination (acetylation and elimination) process performed by the O-acetyltransferase PC-16 and the P.simplicissimum ptmI-ortholog not yet identified in P.crustosum, leads to the production of the prenylated form of penijanthine. The FAD-linked oxidoreductase ptmO then converts the prenylated form of penijanthine into PC-M5 which is in turn transformed into PC-M4 by the aromatic dimethylallyltransferase PC-22. A series of oxidation steps involving 4 cytochrome P450 monooxygenases (PC-21, PC-05, PC-23, PC-20) and a FAD-dependent monooxygenase (PC-14) are required for the transformation of PC-M4 to penitrems A and E. Synthesis of these final products is proposed to proceed via penitrems D and C (PC-21, PC-05, PC-14) and penitrems B and F (PC-21, PC-05, PC-14, PC-23). The polypeptide is Cytochrome P450 monooxygenase penQ (Penicillium crustosum (Blue mold fungus)).